Consider the following 101-residue polypeptide: Urease subunit beta (101 aa).

It belongs to the urease beta subunit family. Heterotrimer of UreA (gamma), UreB (beta) and UreC (alpha) subunits. Three heterotrimers associate to form the active enzyme.

The protein localises to the cytoplasm. It catalyses the reaction urea + 2 H2O + H(+) = hydrogencarbonate + 2 NH4(+). Its pathway is nitrogen metabolism; urea degradation; CO(2) and NH(3) from urea (urease route): step 1/1. The polypeptide is Urease subunit beta (Rhizobium meliloti (strain 1021) (Ensifer meliloti)).